The following is a 273-amino-acid chain: Aquaporin NIP1-4 (273 aa).

The next 2 helical transmembrane spans lie at 59-79 and 86-106; these read LLAE…AITV and VTFP…VYAV. The NPA 1 signature appears at 115-117; that stretch reads NPA. 3 helical membrane-spanning segments follow: residues 133–155, 174–194, and 198–218; these read APAY…RLMF, SLVI…AVAT, and AVGH…VLFA. An NPA 2 motif is present at residues 227-229; the sequence is NPA. A helical transmembrane segment spans residues 245-265; the sequence is WVYILGPFAGAAAGAWAYSLI.

It belongs to the MIP/aquaporin (TC 1.A.8) family. NIP (TC 1.A.8.12) subfamily. Expressed in leaves.

It is found in the membrane. In terms of biological role, aquaporins facilitate the transport of water and small neutral solutes across cell membranes. In Oryza sativa subsp. japonica (Rice), this protein is Aquaporin NIP1-4 (NIP1-4).